Consider the following 129-residue polypeptide: Small ribosomal subunit protein uS8 (129 aa).

It belongs to the universal ribosomal protein uS8 family. In terms of assembly, part of the 30S ribosomal subunit.

Functionally, one of the primary rRNA binding proteins, it binds directly to 16S rRNA central domain where it helps coordinate assembly of the platform of the 30S subunit. The chain is Small ribosomal subunit protein uS8 from Thermoplasma volcanium (strain ATCC 51530 / DSM 4299 / JCM 9571 / NBRC 15438 / GSS1).